A 93-amino-acid chain; its full sequence is uncharacterized protein (93 aa).

The next 3 helical transmembrane spans lie at 9–29 (ITVIGYIAGTLTTFASLPQLI), 40–60 (ISLAFVITFTTGLTLWLIYGI), and 66–86 (PIIVFNILSLMFWIPITYLKI).

Its subcellular location is the cell membrane. This is an uncharacterized protein from Methanocaldococcus jannaschii (strain ATCC 43067 / DSM 2661 / JAL-1 / JCM 10045 / NBRC 100440) (Methanococcus jannaschii).